The following is a 584-amino-acid chain: Cationic amino acid transporter 7, chloroplastic (584 aa).

The N-terminal 49 residues, 1–49 (MEAQYRNHDGDTSFSSLRVYLNSLSDTPSRFSRRAVSVSTSYDEMSRVR), are a transit peptide targeting the chloroplast. 14 helical membrane-spanning segments follow: residues 62-82 (WYDL…FVTT), 90-110 (AGPS…LSAF), 131-151 (ITFG…DYVL), 185-205 (GFNE…FVIC), 214-234 (VNMV…VMGF), 254-274 (FFPF…LSYI), 293-313 (IPMG…LMAI), 346-366 (VVGI…MLGQ), 396-416 (ASAF…LNVL), 417-437 (LNLV…AVIF), 449-469 (WPTL…TLVW), 480-500 (FILG…HCVV), 508-528 (FWGV…NIFL), and 540-560 (FGFF…HASY).

It belongs to the amino acid-polyamine-organocation (APC) superfamily. Cationic amino acid transporter (CAT) (TC 2.A.3.3) family.

The protein localises to the plastid. The protein resides in the chloroplast membrane. In terms of biological role, permease involved in the transport of the cationic amino acids. The protein is Cationic amino acid transporter 7, chloroplastic (CAT7) of Arabidopsis thaliana (Mouse-ear cress).